The chain runs to 550 residues: MTKFIFVTGGVVSSLGKGITSASLGALLEARGLAVTLVKLDPYINVDPGTMSPYQHGEVFVTGDGAETDLDLGHYERFVRMTMSRRNNYTTGRIYENVIAQERRGAYLGNTVQVIPHITDEIKRCICAGADNAQVVLVEIGGTVGDIESLPFLEAIRQMGVELGREQTLFMHLTLIPFIRSAGELKTKPTQHSVKELRSIGIQPDVLVCRLEHPLPESERRKIALFTSVPERAVISAVDVDSIYKIPLELYAQKLDEIVVEQLGLETGPANLTEWQRVIDGLEHPHDEVTITLVGKYVDHREAYKSLSEALIHGGIHTRTRVNITYLDSEEIEAQGIGGLESADAILIPGGFGERGVEGMIIAVQYARENGVPYLGICLGMQVAVIEFARHQAGMKEAHSTEFSEHTPDPVIALITEWRRADGSIERRDEQMGLGGTMRLGNYECELLPGSRAAALYGQERITERHRHRYEFNNDYRELLEGAGLVMAGTSFDGNLVEMVEISHHPWFVACQFHPEFTSTPRDGHPLFNSFIRAAAEHRRRVTLKSSRDS.

An amidoligase domain region spans residues 1 to 265 (MTKFIFVTGG…DEIVVEQLGL (265 aa)). Residue serine 13 participates in CTP binding. Serine 13 contributes to the UTP binding site. 14–19 (SLGKGI) serves as a coordination point for ATP. Tyrosine 54 is a binding site for L-glutamine. Aspartate 71 contributes to the ATP binding site. Mg(2+)-binding residues include aspartate 71 and glutamate 139. Residues 146 to 148 (DIE), 186 to 191 (KTKPTQ), and lysine 222 each bind CTP. UTP-binding positions include 186 to 191 (KTKPTQ) and lysine 222. A Glutamine amidotransferase type-1 domain is found at 290–541 (TITLVGKYVD…IRAAAEHRRR (252 aa)). Glycine 351 contacts L-glutamine. Cysteine 378 functions as the Nucleophile; for glutamine hydrolysis in the catalytic mechanism. L-glutamine-binding positions include 379-382 (LGMQ), glutamate 402, and arginine 469. Active-site residues include histidine 514 and glutamate 516.

Belongs to the CTP synthase family. As to quaternary structure, homotetramer.

It catalyses the reaction UTP + L-glutamine + ATP + H2O = CTP + L-glutamate + ADP + phosphate + 2 H(+). The catalysed reaction is L-glutamine + H2O = L-glutamate + NH4(+). It carries out the reaction UTP + NH4(+) + ATP = CTP + ADP + phosphate + 2 H(+). Its pathway is pyrimidine metabolism; CTP biosynthesis via de novo pathway; CTP from UDP: step 2/2. With respect to regulation, allosterically activated by GTP, when glutamine is the substrate; GTP has no effect on the reaction when ammonia is the substrate. The allosteric effector GTP functions by stabilizing the protein conformation that binds the tetrahedral intermediate(s) formed during glutamine hydrolysis. Inhibited by the product CTP, via allosteric rather than competitive inhibition. In terms of biological role, catalyzes the ATP-dependent amination of UTP to CTP with either L-glutamine or ammonia as the source of nitrogen. Regulates intracellular CTP levels through interactions with the four ribonucleotide triphosphates. The chain is CTP synthase from Nitrosococcus oceani (strain ATCC 19707 / BCRC 17464 / JCM 30415 / NCIMB 11848 / C-107).